Reading from the N-terminus, the 763-residue chain is Thyrotropin receptor (763 aa).

An N-terminal signal peptide occupies residues 1 to 21 (MRPTPLLRLALFLVLPSSLGG). Topologically, residues 22 to 412 (ERCPSPPCEC…EFNPCEDIMG (391 aa)) are extracellular. The cysteines at positions 31 and 41 are disulfide-linked. Residues 51-74 (PPSTQTLKFIETHLKTIPSRAFSN) form an LRR 1 repeat. 2 N-linked (GlcNAc...) asparagine glycosylation sites follow: asparagine 77 and asparagine 99. 5 LRR repeats span residues 125–150 (LPLL…IYST), 151–174 (DVFF…AFQG), 176–199 (CNET…AFNG), 201–223 (KLDA…AFAG), and 225–248 (YSGP…GLEH). N-linked (GlcNAc...) asparagine glycosylation is found at asparagine 177 and asparagine 198. Asparagine 302 carries an N-linked (GlcNAc...) asparagine glycan. Position 384 is a sulfotyrosine (tyrosine 384). A helical transmembrane segment spans residues 413 to 440 (YKFLRIVVWFVSLLALLGNVFVLVILLT). Residues 441–449 (SHYKLTVPR) lie on the Cytoplasmic side of the membrane. A helical membrane pass occupies residues 450 to 472 (FLMCNLAFADFCMGLYLLLIASV). Over 473 to 493 (DLYTQSEYYNHAIDWQTGPGC) the chain is Extracellular. Cysteine 493 and cysteine 568 form a disulfide bridge. Residues 494–516 (NTAGFFTVFASELSVYTLTVITL) form a helical membrane-spanning segment. Topologically, residues 517-536 (ERWHAITFAMRLDRKIRLWH) are cytoplasmic. A helical membrane pass occupies residues 537 to 559 (AYVIMLGGWVCCFLLALLPLVGI). Residues 560–579 (SSYAKVSICLPMDTETPLAL) lie on the Extracellular side of the membrane. The chain crosses the membrane as a helical span at residues 580–601 (AYIILVLLLNIIAFIIVCACYV). Residues 602 to 624 (KIYITVRNPHYNPGDKDTRIAKR) lie on the Cytoplasmic side of the membrane. A helical membrane pass occupies residues 625–648 (MAVLIFTDFMCMAPISFYALSALM). Residues 649 to 659 (NKPLITVTNSK) are Extracellular-facing. The helical transmembrane segment at 660–681 (ILLVLFYPLNSCANPFLYAIFT) threads the bilayer. Over 682–763 (KAFQRDVFML…TSKEYKRTVL (82 aa)) the chain is Cytoplasmic. The tract at residues 742-763 (ENSHLTPKQQDQTSKEYKRTVL) is disordered. Positions 744-753 (SHLTPKQQDQ) are enriched in polar residues. Residues 754–763 (TSKEYKRTVL) are compositionally biased toward basic and acidic residues. The PDZ-binding motif lies at 761–763 (TVL).

Belongs to the G-protein coupled receptor 1 family. FSH/LSH/TSH subfamily. As to quaternary structure, interacts with heterodimer GPHA2:GPHB5; this interaction stimulates cAMP production. Interacts (via the PDZ-binding motif) with SCRIB; regulates TSHR trafficking and function. Glycosylated. Post-translationally, sulfated. Sulfation on Tyr-384 plays a role in thyrotropin receptor binding and activation.

It localises to the cell membrane. The protein localises to the basolateral cell membrane. Functionally, receptor for the thyroid-stimulating hormone (TSH) or thyrotropin. Also acts as a receptor for the heterodimeric glycoprotein hormone (GPHA2:GPHB5) or thyrostimulin. The activity of this receptor is mediated by G proteins which activate adenylate cyclase. Plays a central role in controlling thyroid cell metabolism. This is Thyrotropin receptor (TSHR) from Bos taurus (Bovine).